A 371-amino-acid chain; its full sequence is Queuine tRNA-ribosyltransferase (371 aa).

Aspartate 90 acts as the Proton acceptor in catalysis. Residues 90–94, aspartate 144, glutamine 188, and glycine 215 each bind substrate; that span reads DSGGF. Positions 246–252 are RNA binding; sequence GVGTPED. The Nucleophile role is filled by aspartate 265. The tract at residues 270-274 is RNA binding; important for wobble base 34 recognition; that stretch reads TRNAR. Cysteine 303, cysteine 305, cysteine 308, and histidine 334 together coordinate Zn(2+).

This sequence belongs to the queuine tRNA-ribosyltransferase family. Homodimer. Within each dimer, one monomer is responsible for RNA recognition and catalysis, while the other monomer binds to the replacement base PreQ1. Zn(2+) is required as a cofactor.

The enzyme catalyses 7-aminomethyl-7-carbaguanine + guanosine(34) in tRNA = 7-aminomethyl-7-carbaguanosine(34) in tRNA + guanine. It participates in tRNA modification; tRNA-queuosine biosynthesis. Functionally, catalyzes the base-exchange of a guanine (G) residue with the queuine precursor 7-aminomethyl-7-deazaguanine (PreQ1) at position 34 (anticodon wobble position) in tRNAs with GU(N) anticodons (tRNA-Asp, -Asn, -His and -Tyr). Catalysis occurs through a double-displacement mechanism. The nucleophile active site attacks the C1' of nucleotide 34 to detach the guanine base from the RNA, forming a covalent enzyme-RNA intermediate. The proton acceptor active site deprotonates the incoming PreQ1, allowing a nucleophilic attack on the C1' of the ribose to form the product. After dissociation, two additional enzymatic reactions on the tRNA convert PreQ1 to queuine (Q), resulting in the hypermodified nucleoside queuosine (7-(((4,5-cis-dihydroxy-2-cyclopenten-1-yl)amino)methyl)-7-deazaguanosine). This Neisseria meningitidis serogroup C / serotype 2a (strain ATCC 700532 / DSM 15464 / FAM18) protein is Queuine tRNA-ribosyltransferase.